A 209-amino-acid chain; its full sequence is Ephrin-A2 (209 aa).

An N-terminal signal peptide occupies residues 1–20 (MAPAQRPLLPLLLLLLPLRA). Residues 30-170 (ADRYAVYWNR…RLKVYVRPTN (141 aa)) form the Ephrin RBD domain. The N-linked (GlcNAc...) asparagine glycan is linked to Asn-38. 2 disulfide bridges follow: Cys-69-Cys-110 and Cys-98-Cys-159. Residues Asn-170 and Asn-184 are each glycosylated (N-linked (GlcNAc...) asparagine). A lipid anchor (GPI-anchor amidated asparagine) is attached at Asn-184. Residues 185–209 (SSCSGLGGCHLFLTTVPVLWSLLGS) constitute a propeptide, removed in mature form.

This sequence belongs to the ephrin family. Binds to the receptor tyrosine kinases EPHA3, EPHA4 and EPHA5. Interacts with EPHA8; activates EPHA8. Expressed in myogenic progenitor cells.

The protein localises to the cell membrane. Cell surface GPI-bound ligand for Eph receptors, a family of receptor tyrosine kinases which are crucial for migration, repulsion and adhesion during neuronal, vascular and epithelial development. Binds promiscuously Eph receptors residing on adjacent cells, leading to contact-dependent bidirectional signaling into neighboring cells. The signaling pathway downstream of the receptor is referred to as forward signaling while the signaling pathway downstream of the ephrin ligand is referred to as reverse signaling. With the EPHA2 receptor may play a role in bone remodeling through regulation of osteoclastogenesis and osteoblastogenesis. This Mus musculus (Mouse) protein is Ephrin-A2 (Efna2).